The chain runs to 247 residues: MQTQVLFEHPLNEKMRTWLRIEFLIQQLTVNLPIVDHAGALHFFRNVSELLDVFERGEVRTELLKELDRQQRKLQTWIGVPGVDQSRIEALIQQLKAAGSVLISAPRIGQFLREDRLIALVRQRLSIPGGCCSFDLPTLHIWLHLPQAQRDSQVETWIASLNPLTQALTMVLDLIRQSAPFRKQTSLNGFYQDNGGDADLLRLNLSLDSQLYPQISGHKSRFAIRFMPLDTENGQVPERLDFELACC.

Belongs to the ZapD family. Interacts with FtsZ.

It is found in the cytoplasm. Cell division factor that enhances FtsZ-ring assembly. Directly interacts with FtsZ and promotes bundling of FtsZ protofilaments, with a reduction in FtsZ GTPase activity. This Shigella sonnei (strain Ss046) protein is Cell division protein ZapD.